A 149-amino-acid chain; its full sequence is Transcriptional repressor NrdR (149 aa).

A zinc finger lies at 3-34; that stretch reads CPFCSENDTKVIDSRLVADGHQVRRRRQCLAC. The 91-residue stretch at 49 to 139 folds into the ATP-cone domain; that stretch reads PKVIKSNGNR…VYRSFEDIRE (91 aa).

Belongs to the NrdR family. Zn(2+) serves as cofactor.

Negatively regulates transcription of bacterial ribonucleotide reductase nrd genes and operons by binding to NrdR-boxes. The sequence is that of Transcriptional repressor NrdR from Vibrio atlanticus (strain LGP32) (Vibrio splendidus (strain Mel32)).